The sequence spans 201 residues: MSSSLTPAIDQLVRCLRYLPGVGAKTATRMALNLLERDQGRAADLAIAISDALTRVKRCSRCQNFCEAELCSICESPKRDDRVLCVVESPTDVLAIEQTSDYSGRYFVLMGHLSPIDGIGPEDIGVDKLKQLLQESAVSELILATNPTVEGEATAHFIAHIAKDLNIPVSRIAHGIPLGGELGMIDSGTLSHALQGRKPFA.

Residues 59-74 (CSRCQNFCEAELCSIC) form a C4-type zinc finger. The Toprim domain maps to 82 to 177 (RVLCVVESPT…PVSRIAHGIP (96 aa)).

It belongs to the RecR family.

Its function is as follows. May play a role in DNA repair. It seems to be involved in an RecBC-independent recombinational process of DNA repair. It may act with RecF and RecO. In Hahella chejuensis (strain KCTC 2396), this protein is Recombination protein RecR.